Reading from the N-terminus, the 882-residue chain is DNA mismatch repair protein MutS (882 aa).

640-647 (GPNMGGKS) contacts ATP.

This sequence belongs to the DNA mismatch repair MutS family.

Functionally, this protein is involved in the repair of mismatches in DNA. It is possible that it carries out the mismatch recognition step. This protein has a weak ATPase activity. This Albidiferax ferrireducens (strain ATCC BAA-621 / DSM 15236 / T118) (Rhodoferax ferrireducens) protein is DNA mismatch repair protein MutS.